We begin with the raw amino-acid sequence, 62 residues long: Large ribosomal subunit protein uL30 (62 aa).

It belongs to the universal ribosomal protein uL30 family. In terms of assembly, part of the 50S ribosomal subunit.

This Herpetosiphon aurantiacus (strain ATCC 23779 / DSM 785 / 114-95) protein is Large ribosomal subunit protein uL30.